A 633-amino-acid chain; its full sequence is tRNA uridine 5-carboxymethylaminomethyl modification enzyme MnmG (633 aa).

Residues glycine 13 to glycine 18, valine 125, and serine 180 contribute to the FAD site. NAD(+) is bound at residue glycine 273 to phenylalanine 287. Glutamine 370 lines the FAD pocket.

The protein belongs to the MnmG family. Homodimer. Heterotetramer of two MnmE and two MnmG subunits. Requires FAD as cofactor.

It localises to the cytoplasm. In terms of biological role, NAD-binding protein involved in the addition of a carboxymethylaminomethyl (cmnm) group at the wobble position (U34) of certain tRNAs, forming tRNA-cmnm(5)s(2)U34. This Alteromonas mediterranea (strain DSM 17117 / CIP 110805 / LMG 28347 / Deep ecotype) protein is tRNA uridine 5-carboxymethylaminomethyl modification enzyme MnmG.